Here is a 1114-residue protein sequence, read N- to C-terminus: M-phase phosphoprotein 9 (1114 aa).

Disordered regions lie at residues 1 to 55 (MEDF…KTGP), 106 to 161 (RPSC…DCHV), 183 to 207 (AKEPTEPLEPGAASQGQHPASVVQA), 267 to 301 (TSWAQRLKQNQSKQAHTEDDCSGPKPGSELNWKPP), and 410 to 468 (VLEP…STIP). Over residues 24-51 (APQSLGLSLHANRSSPHLSTNGVSSFSG) the composition is skewed to polar residues. A compositionally biased stretch (low complexity) spans 106 to 119 (RPSCSSSSVSEQVS). A compositionally biased stretch (polar residues) spans 149–161 (QPASSTSYPDCHV). Polar residues-rich tracts occupy residues 267–280 (TSWAQRLKQNQSKQ) and 429–446 (HNPSQVSGFSKYPSTTRA). The segment at 368-729 (LSQVLTLDPG…EAQVKQAEHE (362 aa)) is required for its centrosomal localization. Positions 382–431 (KPKEHVAGIQAHGFLHALDDRISFSPDSVLEPSLSRHSDTDSSSQASHNP) are interaction with CEP97. The stretch at 574–733 (DRCGQLDSAL…KQAEHESMLS (160 aa)) forms a coiled coil. At serine 710 the chain carries Phosphoserine; by TTBK2. Lysine 713 participates in a covalent cross-link: Glycyl lysine isopeptide (Lys-Gly) (interchain with G-Cter in ubiquitin). Serine 717 carries the phosphoserine; by TTBK2 modification. Disordered stretches follow at residues 727–755 (EHESMLSLRNGAKVPERPSRSNSVATSDV), 840–931 (SWGT…GFSH), and 975–1002 (EEKKYSEKNSDDPVNPSSCPEHSPNGLK). Residues 730 to 963 (SMLSLRNGAK…PVSTLQQTTA (234 aa)) are interaction with KIF24. The segment covering 852-868 (SKLVNSRQTEPSVNTGR) has biased composition (polar residues). Residues 881 to 898 (QTSASQRSSSLPPSSRKA) show a composition bias toward low complexity. A Phosphoserine modification is found at serine 926. Residues 975–985 (EEKKYSEKNSD) show a composition bias toward basic and acidic residues. Residues 1040–1105 (RTLAETERFF…GSVRMTLKKF (66 aa)) are a coiled coil.

As to quaternary structure, interacts with CCP110, CEP97 and KIF24. TTBK2-mediated phosphorylation at Ser-710 and Ser-717, promotes its ubiquitination at Lys-713 leading to proteasomal degradation, loss of MPHOSPH9 facilitates the removal of the CP110-CEP97 complex from the mother centrioles, promoting the initiation of ciliogenesis. Phosphorylated in M (mitotic) phase. In terms of processing, ubiquitinated at Lys-713, leading to proteasomal degradation.

The protein resides in the cytoplasm. Its subcellular location is the cytoskeleton. It localises to the microtubule organizing center. It is found in the centrosome. The protein localises to the centriole. The protein resides in the golgi apparatus membrane. Negatively regulates cilia formation by recruiting the CP110-CEP97 complex (a negative regulator of ciliogenesis) at the distal end of the mother centriole in ciliary cells. At the beginning of cilia formation, MPHOSPH9 undergoes TTBK2-mediated phosphorylation and degradation via the ubiquitin-proteasome system and removes itself and the CP110-CEP97 complex from the distal end of the mother centriole, which subsequently promotes cilia formation. The protein is M-phase phosphoprotein 9 (Mphosph9) of Mus musculus (Mouse).